Consider the following 124-residue polypeptide: Large ribosomal subunit protein bL12 (124 aa).

It belongs to the bacterial ribosomal protein bL12 family. As to quaternary structure, homodimer. Part of the ribosomal stalk of the 50S ribosomal subunit. Forms a multimeric L10(L12)X complex, where L10 forms an elongated spine to which 2 to 4 L12 dimers bind in a sequential fashion. Binds GTP-bound translation factors.

Forms part of the ribosomal stalk which helps the ribosome interact with GTP-bound translation factors. Is thus essential for accurate translation. The chain is Large ribosomal subunit protein bL12 from Liberibacter africanus subsp. capensis.